Here is a 353-residue protein sequence, read N- to C-terminus: Putative transport protein aq_740 (353 aa).

Helical transmembrane passes span 4 to 24 (LSLF…LYLL), 28 to 48 (FNPI…YGFI), 60 to 80 (FLVI…FAVI), 156 to 176 (VYTA…LFFI), 209 to 229 (VLAV…MGFI), 240 to 260 (LIWA…AAFV), 268 to 288 (LFTT…TFLI), and 309 to 329 (VALF…GVFL).

This sequence belongs to the autoinducer-2 exporter (AI-2E) (TC 2.A.86) family.

The protein resides in the cell membrane. This Aquifex aeolicus (strain VF5) protein is Putative transport protein aq_740.